The following is a 586-amino-acid chain: Arginine--tRNA ligase (586 aa).

The short motif at Ala130 to His140 is the 'HIGH' region element.

This sequence belongs to the class-I aminoacyl-tRNA synthetase family. As to quaternary structure, monomer.

The protein localises to the cytoplasm. It catalyses the reaction tRNA(Arg) + L-arginine + ATP = L-arginyl-tRNA(Arg) + AMP + diphosphate. This is Arginine--tRNA ligase from Methylobacterium sp. (strain 4-46).